We begin with the raw amino-acid sequence, 92 residues long: Small ribosomal subunit protein uS19 (92 aa).

Belongs to the universal ribosomal protein uS19 family.

Protein S19 forms a complex with S13 that binds strongly to the 16S ribosomal RNA. The polypeptide is Small ribosomal subunit protein uS19 (Allorhizobium ampelinum (strain ATCC BAA-846 / DSM 112012 / S4) (Agrobacterium vitis (strain S4))).